The chain runs to 183 residues: Oleosin 5 (183 aa).

The tract at residues 1–39 (MADVRTHSHQLQVHPQRQHEGGIKVLYPQSGPSSTQVLA) is polar. 3 consecutive transmembrane segments (helical) span residues 37–57 (VLAV…AGLT), 66–86 (MLAF…AFVI), and 87–107 (GLAM…LSSM). The segment at 40-113 (VFVGVPIGGT…LSSMSWVLNY (74 aa)) is hydrophobic. A disordered region spans residues 144–183 (KDAGQTIEDKAHDVREAKTFDVRDRDTTKGTHNVRDTKTT).

Belongs to the oleosin family.

It is found in the lipid droplet. It localises to the membrane. In terms of biological role, may have a structural role to stabilize the lipid body during desiccation of the seed by preventing coalescence of the oil. Probably interacts with both lipid and phospholipid moieties of lipid bodies. May also provide recognition signals for specific lipase anchorage in lipolysis during seedling growth. This chain is Oleosin 5, found in Arabidopsis thaliana (Mouse-ear cress).